Here is a 97-residue protein sequence, read N- to C-terminus: UPF0729 protein GD16342 (97 aa).

The disordered stretch occupies residues 64–97 (KPEKASVGPAEESQNPPLNAIAAETEVDESKKEI). A Phosphoserine modification is found at Ser-69.

Belongs to the UPF0729 family.

This chain is UPF0729 protein GD16342, found in Drosophila simulans (Fruit fly).